A 306-amino-acid polypeptide reads, in one-letter code: tRNA pseudouridine synthase B (306 aa).

Asp39 (nucleophile) is an active-site residue.

The protein belongs to the pseudouridine synthase TruB family. Type 1 subfamily.

The enzyme catalyses uridine(55) in tRNA = pseudouridine(55) in tRNA. Its function is as follows. Responsible for synthesis of pseudouridine from uracil-55 in the psi GC loop of transfer RNAs. This is tRNA pseudouridine synthase B from Arthrobacter sp. (strain FB24).